The primary structure comprises 334 residues: MRLLEFTALSSLLVLFLLLAVSAEQCGKQAGGARCPSGMCCSNFGWCGNTQDYCGPGKCQSQCPSGPGPTPRPPTPTPGPSTGDISNIISSSMFDQMLKHRNDNTCQGKSFYTYNAFITAARSFRGFGTTGDTTRRKREVAAFFAQTSHETTGGWDTAPDGRYAWGYCYLREQGNPPSYCVQSSQWPCAPGQKYYGRGPIQISYNYNYGPCGRAIGQNLLNNPDLVATNAVVSFKSAIWFWMTAQSPKPSCHDVITGRWTPSAADRAANRLPGYGVITNIINGGLECGHGSDARVQDRIGFYRRYCSILGVSPGDNIDCGNQKSFNSGLLLETM.

The N-terminal stretch at 1–23 (MRLLEFTALSSLLVLFLLLAVSA) is a signal peptide. One can recognise a Chitin-binding type-1 domain in the interval 24-65 (EQCGKQAGGARCPSGMCCSNFGWCGNTQDYCGPGKCQSQCPS). Intrachain disulfides connect Cys-26–Cys-41, Cys-35–Cys-47, Cys-40–Cys-54, and Cys-59–Cys-63. Residues 64–84 (PSGPGPTPRPPTPTPGPSTGD) are disordered. Positions 66 to 79 (GPGPTPRPPTPTPG) are enriched in pro residues. Residues Pro-73, Pro-74, and Pro-76 each carry the 4-hydroxyproline modification. Cystine bridges form between Cys-106–Cys-168, Cys-180–Cys-188, and Cys-287–Cys-319. The active-site Proton donor is Glu-150. Positions 328–334 (GLLLETM) are cleaved as a propeptide — removed in mature form.

The protein belongs to the glycosyl hydrolase 19 family. Chitinase class I subfamily. In terms of processing, the 4-hydroxyproline residues are not glycosylated in this plant vacuolar protein.

Its subcellular location is the vacuole. The enzyme catalyses Random endo-hydrolysis of N-acetyl-beta-D-glucosaminide (1-&gt;4)-beta-linkages in chitin and chitodextrins.. Defense against chitin-containing fungal pathogens. The protein is Endochitinase 3 (CHN14) of Nicotiana tabacum (Common tobacco).